We begin with the raw amino-acid sequence, 283 residues long: Putative sugar uptake protein BA_0200/GBAA_0200/BAS0200 (283 aa).

The next 10 membrane-spanning stretches (helical) occupy residues 4-21, 26-48, 52-71, 84-106, 110-132, 151-173, 178-195, 208-230, 234-253, and 260-279; these read LLAL…LVSV, GAYS…MYVF, ALTM…WALG, VSTT…GVIA, WTTT…GVVF, LLTL…WYNI, AILP…VLTS, ALSG…RVGV, FPLS…VFLG, and QLIF…VLLG.

Belongs to the GRP transporter (TC 2.A.7.5) family.

It is found in the cell membrane. This chain is Putative sugar uptake protein BA_0200/GBAA_0200/BAS0200, found in Bacillus anthracis.